The following is a 327-amino-acid chain: Lipoyl synthase (327 aa).

[4Fe-4S] cluster-binding residues include Cys74, Cys79, Cys85, Cys100, Cys104, Cys107, and Ser314. Positions 86–303 (FSGGTATFMI…AEEGERMGFK (218 aa)) constitute a Radical SAM core domain.

This sequence belongs to the radical SAM superfamily. Lipoyl synthase family. [4Fe-4S] cluster serves as cofactor.

It is found in the cytoplasm. The catalysed reaction is [[Fe-S] cluster scaffold protein carrying a second [4Fe-4S](2+) cluster] + N(6)-octanoyl-L-lysyl-[protein] + 2 oxidized [2Fe-2S]-[ferredoxin] + 2 S-adenosyl-L-methionine + 4 H(+) = [[Fe-S] cluster scaffold protein] + N(6)-[(R)-dihydrolipoyl]-L-lysyl-[protein] + 4 Fe(3+) + 2 hydrogen sulfide + 2 5'-deoxyadenosine + 2 L-methionine + 2 reduced [2Fe-2S]-[ferredoxin]. It functions in the pathway protein modification; protein lipoylation via endogenous pathway; protein N(6)-(lipoyl)lysine from octanoyl-[acyl-carrier-protein]: step 2/2. Its function is as follows. Catalyzes the radical-mediated insertion of two sulfur atoms into the C-6 and C-8 positions of the octanoyl moiety bound to the lipoyl domains of lipoate-dependent enzymes, thereby converting the octanoylated domains into lipoylated derivatives. The chain is Lipoyl synthase from Pseudomonas paraeruginosa (strain DSM 24068 / PA7) (Pseudomonas aeruginosa (strain PA7)).